The chain runs to 262 residues: Thrombin-like enzyme gyroxin B1.3 (262 aa).

An N-terminal signal peptide occupies residues 1 to 18; it reads MVLIRVLANLLILQLSYA. A propeptide spanning residues 19–262 is cleaved from the precursor; the sequence is QKSSELVIGG…AGSETVNCPS (244 aa). In terms of domain architecture, Peptidase S1 spans 25–253; the sequence is VIGGDECNIN…HLDWIQNIIA (229 aa). 6 cysteine pairs are disulfide-bonded: C31/C165, C52/C68, C102/C260, C144/C214, C176/C193, and C204/C229. The active-site Charge relay system is H67. N-linked (GlcNAc...) asparagine glycosylation is present at N105. D112 acts as the Charge relay system in catalysis. The active-site Charge relay system is the S208.

Belongs to the peptidase S1 family. Snake venom subfamily. In terms of assembly, monomer. In terms of tissue distribution, expressed by the venom gland.

It localises to the secreted. Functionally, thrombin-like snake venom serine protease. Displays a specificity similar to trypsin. Releases only fibrinopeptide A in the conversion of fibrinogen to fibrin. Reversibly increases the permeability of the blood brain barrier (BBB) in mice. Induces the barrel rotation syndrome in mice, which is manifested by gyroxin-like, rapid rolling motions. This syndrome may be due to its effect on BBB permeability, and certainly also to other actions affecting endogenous substrates present in the endothelium, nervous tissues or blood. Also shows a moderate inhibitory activity on the human voltage-gated potassium channel Kv10.1/KCNH1/EAG1 (58% current inhibition at 5 uM). It blocks Kv10.1/KCNH1/EAG1 in a time and dose-dependent manner and with a mechanism independent of its enzymatic activity. It may have a preference in interacting with Kv10.1/KCNH1/EAG1 in its closed state, since the inhibitory effect of the toxin is decreased at more depolarized potentials. The sequence is that of Thrombin-like enzyme gyroxin B1.3 from Crotalus durissus terrificus (South American rattlesnake).